We begin with the raw amino-acid sequence, 178 residues long: Leukemia NUP98 fusion partner 1 (178 aa).

3 disordered regions span residues 28–55 (EDQR…PLPV), 89–108 (SEDG…HSKI), and 147–178 (IKSR…KGPE). Residues 34–47 (RERHRLQATSHRKT) are compositionally biased toward basic residues. A compositionally biased stretch (basic and acidic residues) spans 147–167 (IKSRKKVEEERSSRKEEHGEA).

The polypeptide is Leukemia NUP98 fusion partner 1 (LNP1) (Homo sapiens (Human)).